The primary structure comprises 37 residues: NAD-reducing hydrogenase HoxS subunit alpha (37 aa).

The protein belongs to the complex I 51 kDa subunit family. Tetramer of an alpha and a gamma subunits (flavin-containing dimer), and a delta and a nickel-containing beta subunits (hydrogenase dimer). It depends on FMN as a cofactor. The cofactor is [4Fe-4S] cluster.

It localises to the cytoplasm. It catalyses the reaction H2 + NAD(+) = NADH + H(+). Functionally, subunits alpha and gamma of HoxS constitute an NADH--oxidoreductase. This Rhodococcus opacus (Nocardia opaca) protein is NAD-reducing hydrogenase HoxS subunit alpha (hoxF).